The primary structure comprises 468 residues: tRNA (guanine(37)-N(1))-methyltransferase 1 (468 aa).

Residues His-207, 245–246 (DL), and 273–274 (DA) each bind S-adenosyl-L-methionine. The segment at 301 to 348 (KEAAVSRGGETNSSGEEIRESNASINEPLGANKKPSGTTKTENGVGKD) is disordered. Residues 309–325 (GETNSSGEEIRESNASI) show a composition bias toward polar residues. Residue Asn-380 participates in S-adenosyl-L-methionine binding.

The protein belongs to the class I-like SAM-binding methyltransferase superfamily. TRM5/TYW2 family. In terms of assembly, monomer.

The protein resides in the mitochondrion matrix. It is found in the nucleus. The protein localises to the cytoplasm. The catalysed reaction is guanosine(37) in tRNA + S-adenosyl-L-methionine = N(1)-methylguanosine(37) in tRNA + S-adenosyl-L-homocysteine + H(+). Specifically methylates the N1 position of guanosine-37 in various cytoplasmic and mitochondrial tRNAs. Methylation is not dependent on the nature of the nucleoside 5' of the target nucleoside. This is the first step in the biosynthesis of wybutosine (yW), a modified base adjacent to the anticodon of tRNAs and required for accurate decoding. The protein is tRNA (guanine(37)-N(1))-methyltransferase 1 of Arabidopsis thaliana (Mouse-ear cress).